The following is a 59-amino-acid chain: Large ribosomal subunit protein uL30 (59 aa).

It belongs to the universal ribosomal protein uL30 family. Part of the 50S ribosomal subunit.

This chain is Large ribosomal subunit protein uL30, found in Geotalea uraniireducens (strain Rf4) (Geobacter uraniireducens).